Reading from the N-terminus, the 301-residue chain is GTPase Era (301 aa).

In terms of domain architecture, Era-type G spans K6–I173. The G1 stretch occupies residues G14 to S21. G14–S21 contacts GTP. The G2 stretch occupies residues Q40–N44. A G3 region spans residues D61–G64. Residues D61–I65 and N123–D126 each bind GTP. The G4 stretch occupies residues N123–D126. The tract at residues I152–A154 is G5. The 79-residue stretch at T204–K282 folds into the KH type-2 domain.

It belongs to the TRAFAC class TrmE-Era-EngA-EngB-Septin-like GTPase superfamily. Era GTPase family. Monomer.

The protein localises to the cytoplasm. It is found in the cell membrane. In terms of biological role, an essential GTPase that binds both GDP and GTP, with rapid nucleotide exchange. Plays a role in 16S rRNA processing and 30S ribosomal subunit biogenesis and possibly also in cell cycle regulation and energy metabolism. This Listeria monocytogenes serotype 4b (strain F2365) protein is GTPase Era.